The chain runs to 112 residues: Gonad-inhibiting hormone (112 aa).

The N-terminal stretch at 1-31 (MVTRVGSGFSVQRVWLLLVIVVVLCGSVTQQ) is a signal peptide. 3 disulfide bridges follow: Cys-41–Cys-78, Cys-58–Cys-74, and Cys-61–Cys-87. Ala-109 is modified (alanine amide).

In terms of tissue distribution, produced in the eyestalk X-organ sinus gland complex of male and female lobsters.

It localises to the secreted. Inhibits vitellogenesis in female animals. Plays a prominent role in the regulation of reproduction/molting processes. This is Gonad-inhibiting hormone from Homarus americanus (American lobster).